Reading from the N-terminus, the 1336-residue chain is MEENEVESSSDAAPRPGQPEEPSESGLGVGTSEAVSADSTDAATAPGLTEADDSGVGQSSDSGSRSVEEVSESISTEPLPQGYLPDSSSVSRGPVAEVPGGPPALVHSSALPDPSMLVSDCTASSSDLGSAIDKIIESTIGPDLIQSCITVTSGEEGGAETTQYLILQGPDDGAPMASSMSTSTLANSLAAIEALADGPTSTSTCLEPAEQPPGEPSSLAQPPAPVVEELDLQGLEAMMEVVVVQQFKCKMCQYRSSTKATLLRHMRERHFRPALAVAAAAAGKRGRVRKWGTSTKTTEEEGPEEEEEDDDIVDAGAIDDLEEDSDYNPAEDEPRGRQLRLQRPTPSTLRPRRRPGRPRKLPRLETSDLHDGIGEPLVSSQSTQSPPELQDLEAPSSSDLRALGKVGRGLVETGVSQSDAENAAPSCQDEADVPPRRRGRPSRRFLGKKYRKYYYKSPKPLLRPYLCRICGSRFLSHEDLRFHVNSHEAGDPQLFKCLQCSYRSRRWSSLKEHMFNHVGSKPYKCDECSYTSVYRKDVIRHAAVHSQDRKKRPDPTPKLSSFPCPVCGRVYPMQKRLTQHMKTHSTEKPHMCDKCGKSFKKRYTFKMHLLTHIQAVANRRFKCEFCEFVCEDKKALLNHQLSHVSDKPFKCSFCPYRTFREDFLLSHVAVKHTGAKPFACEYCHFSTRHKKNLRLHVRCRHANSFEEWGRRHPEEPPSRRRPFFSLQQIEELKQQHSAAPGPPLSSAGPEAPQEPAPFQPPETPPLLCPDALGGATIIYQQGAEESTAMATQTALDLLLNMSAQRELGATALQVAVVKSEDVEAELTSTARQPSSEDTTPRVVTLHVAESGSSVAAESQLGPSDLQQIALPPGPFSGASYSVITAPPVEGRASASGPPYREEPPGEAAQAVVVNDTLKEAGTHYIMAADGTQLHHIELTADGSISFPSPDTLAPGTKWPLLQCGGPPRDGPEVLSPTKTHHTGGSQGSSTPPPATSHALGLLVPHSPPSAAASSTKKFSCKVCSEAFPSRAEMESHKRAHAGPAAFKCPDCPFSARQWPEVRAHMAQHSSLRPHQCNQCSFASKNKKDLRRHMLTHTNEKPFSCHVCGQRFNRNGHLKFHIQRLHSIDGRKTGTSTARAPAQTIILNSEEETLATLHTAFQSNHGTLGTERLQQALSQEHIIVAQEQTVANQEEATYIQEITADGQTVQHLVTSDNQVQYIISQDGVQHLLPQEYVVVPDGHHIQVQEGQITHIQYEQGTPFLQESQIQYVPVSPSQQLVTQAQLEAAAHSAVTAVADAAMAQAQGLFGTEEAVPEHIQQLQHQGIEYDVITLSDD.

2 disordered regions span residues 1–108 and 199–222; these read MEEN…LVHS and PTST…LAQP. Low complexity-rich tracts occupy residues 31-45 and 54-65; these read TSEA…AATA and SGVGQSSDSGSR. The C2H2-type 1 zinc finger occupies 247–270; the sequence is FKCKMCQYRSSTKATLLRHMRERH. 2 disordered regions span residues 282-398 and 415-442; these read AGKR…PSSS and VSQS…GRPS. A compositionally biased stretch (acidic residues) spans 300–331; that stretch reads EEGPEEEEEDDDIVDAGAIDDLEEDSDYNPAE. A compositionally biased stretch (low complexity) spans 339–349; the sequence is LRLQRPTPSTL. The segment covering 350 to 361 has biased composition (basic residues); it reads RPRRRPGRPRKL. Positions 362-373 are enriched in basic and acidic residues; sequence PRLETSDLHDGI. Residues 378 to 387 are compositionally biased toward polar residues; sequence VSSQSTQSPP. C2H2-type zinc fingers lie at residues 465–487, 495–517, 523–545, 562–584, 590–612, 621–643, 649–672, and 678–701; these read YLCR…VNSH, FKCL…MFNH, YKCD…AAVH, FPCP…MKTH, HMCD…LLTH, FKCE…QLSH, FKCS…AVKH, and FACE…RCRH. 2 disordered regions span residues 732–766 and 961–1013; these read LKQQ…TPPL and LQCG…AAAS. The segment covering 752–766 has biased composition (pro residues); the sequence is PQEPAPFQPPETPPL. Phosphoserine occurs at positions 975 and 1006. C2H2-type zinc fingers lie at residues 1018–1040, 1046–1068, 1074–1096, and 1102–1125; these read FSCK…KRAH, FKCP…MAQH, HQCN…MLTH, and FSCH…QRLH. A Glycyl lysine isopeptide (Lys-Gly) (interchain with G-Cter in SUMO2) cross-link involves residue Lys1021. Ser1148 carries the phosphoserine modification.

The protein belongs to the krueppel C2H2-type zinc-finger protein family. Interacts with NCOA6; may enhance ligand-dependent transcriptional activation by nuclear hormone receptors. Interacts with CNOT6. Interacts with CNOT9; the interaction is direct. Component of a nuclear receptor-mediated transcription complex composed of at least ZNF335, CCAR2 and EMSY; the complex stimulates the transcription of nuclear receptor target genes such as SOX9 and HOXA1. Within the complex interacts with EMSY and interacts (via C-terminus) with CCAR2. Interacts with members of histone H3'Lys4'(H3K4) methyltransferase complexes ASH2L, CXXC1, KMT2A/MLL1, RBBP5, SETD1A and WDR5. Component of a histone methylation complex composed of at least ZNF335, RBBP5, ASH2L and WDR5; the complex may have histone H3-specific methyltransferase activity, however does not have specificity for 'Lys-4' of histone H3. Interacts with RBBP5 and WDR5. Interacts with ASHL2. Components of this complex may associate with components of the ZNF335-CCAR2-EMSY nuclear receptor-mediated transcription complex to form a complex at least composed of ZNF335, HCFC1, CCAR2, EMSY, MKI67, RBBP5, ASH2L and WDR5. Within this complex also interacts with HCFC1 and MKI67.

The protein localises to the nucleus. Functionally, component or associated component of some histone methyltransferase complexes may regulate transcription through recruitment of those complexes on gene promoters. Enhances ligand-dependent transcriptional activation by nuclear hormone receptors. Plays an important role in neural progenitor cell proliferation and self-renewal through the regulation of specific genes involved brain development, including REST. Also controls the expression of genes involved in somatic development and regulates, for instance, lymphoblast proliferation. This Rattus norvegicus (Rat) protein is Zinc finger protein 335 (Znf335).